The following is a 457-amino-acid chain: Bifunctional protein GlmU (457 aa).

The interval 1–230 (MSKRYAVVLA…FEESLGVNDR (230 aa)) is pyrophosphorylase. Residues 9-12 (LAAG), lysine 23, glutamine 73, and 78-79 (GT) contribute to the UDP-N-acetyl-alpha-D-glucosamine site. Aspartate 103 contacts Mg(2+). Glycine 140, glutamate 155, asparagine 170, and asparagine 228 together coordinate UDP-N-acetyl-alpha-D-glucosamine. Residue asparagine 228 participates in Mg(2+) binding. The interval 231-251 (IALAEASRLMQRRINENHMRN) is linker. Positions 252-457 (GVTLVNPENT…GYAKHLNHGK (206 aa)) are N-acetyltransferase. UDP-N-acetyl-alpha-D-glucosamine-binding residues include arginine 333 and lysine 351. The Proton acceptor role is filled by histidine 363. UDP-N-acetyl-alpha-D-glucosamine is bound by residues tyrosine 366 and asparagine 377. Residues 386–387 (NY), alanine 423, and arginine 440 contribute to the acetyl-CoA site.

It in the N-terminal section; belongs to the N-acetylglucosamine-1-phosphate uridyltransferase family. This sequence in the C-terminal section; belongs to the transferase hexapeptide repeat family. Homotrimer. Mg(2+) serves as cofactor.

The protein resides in the cytoplasm. The enzyme catalyses alpha-D-glucosamine 1-phosphate + acetyl-CoA = N-acetyl-alpha-D-glucosamine 1-phosphate + CoA + H(+). It carries out the reaction N-acetyl-alpha-D-glucosamine 1-phosphate + UTP + H(+) = UDP-N-acetyl-alpha-D-glucosamine + diphosphate. It functions in the pathway nucleotide-sugar biosynthesis; UDP-N-acetyl-alpha-D-glucosamine biosynthesis; N-acetyl-alpha-D-glucosamine 1-phosphate from alpha-D-glucosamine 6-phosphate (route II): step 2/2. It participates in nucleotide-sugar biosynthesis; UDP-N-acetyl-alpha-D-glucosamine biosynthesis; UDP-N-acetyl-alpha-D-glucosamine from N-acetyl-alpha-D-glucosamine 1-phosphate: step 1/1. Its pathway is bacterial outer membrane biogenesis; LPS lipid A biosynthesis. Its function is as follows. Catalyzes the last two sequential reactions in the de novo biosynthetic pathway for UDP-N-acetylglucosamine (UDP-GlcNAc). The C-terminal domain catalyzes the transfer of acetyl group from acetyl coenzyme A to glucosamine-1-phosphate (GlcN-1-P) to produce N-acetylglucosamine-1-phosphate (GlcNAc-1-P), which is converted into UDP-GlcNAc by the transfer of uridine 5-monophosphate (from uridine 5-triphosphate), a reaction catalyzed by the N-terminal domain. This Listeria monocytogenes serotype 4b (strain CLIP80459) protein is Bifunctional protein GlmU.